A 464-amino-acid polypeptide reads, in one-letter code: Soluble pyridine nucleotide transhydrogenase (464 aa).

An FAD-binding site is contributed by 35-44 (DNRPLVGGNC).

The protein belongs to the class-I pyridine nucleotide-disulfide oxidoreductase family. The cofactor is FAD.

The protein resides in the cytoplasm. It catalyses the reaction NAD(+) + NADPH = NADH + NADP(+). Conversion of NADPH, generated by peripheral catabolic pathways, to NADH, which can enter the respiratory chain for energy generation. This Ectopseudomonas mendocina (strain ymp) (Pseudomonas mendocina) protein is Soluble pyridine nucleotide transhydrogenase.